The following is an 86-amino-acid chain: Late effector protein 1 (86 aa).

Positions 1–24 (MRSHQMAAFFAVSLMMMVVLGALS) are cleaved as a signal peptide.

The protein belongs to the lep1 family. In terms of assembly, interacts at the cell wall with secreted rep1 repellent peptides.

It localises to the secreted. Its subcellular location is the cell wall. In terms of biological role, core effector contributing to spore formation and tumor formation at the host plant. Modulates surface hydrophobicity promoting cell-cell or cell-surface contacts. Lep1 and rep1 interact in aerial hyphae to form a strong hydrophobic layer. Plays a crucial role in hyphal aggregation that might be a prerequisite for strong proliferation of diploid cells and for induction of the morphological changes associated with spore formation. In Mycosarcoma maydis (Corn smut fungus), this protein is Late effector protein 1.